Here is a 143-residue protein sequence, read N- to C-terminus: Large ribosomal subunit protein uL11 (143 aa).

Belongs to the universal ribosomal protein uL11 family. In terms of assembly, part of the ribosomal stalk of the 50S ribosomal subunit. Interacts with L10 and the large rRNA to form the base of the stalk. L10 forms an elongated spine to which L12 dimers bind in a sequential fashion forming a multimeric L10(L12)X complex. Post-translationally, one or more lysine residues are methylated.

In terms of biological role, forms part of the ribosomal stalk which helps the ribosome interact with GTP-bound translation factors. This is Large ribosomal subunit protein uL11 from Borrelia garinii subsp. bavariensis (strain ATCC BAA-2496 / DSM 23469 / PBi) (Borreliella bavariensis).